We begin with the raw amino-acid sequence, 141 residues long: Protein C19orf12 (141 aa).

The chain crosses the membrane as a helical span at residues 40–60 (FVGGLVGGPPGLAVGGAVGGL).

The protein belongs to the C19orf12 family.

It is found in the mitochondrion. The protein resides in the mitochondrion membrane. It localises to the endoplasmic reticulum. Its subcellular location is the cytoplasm. The protein localises to the cytosol. This is Protein C19orf12 (C19orf12) from Homo sapiens (Human).